A 225-amino-acid chain; its full sequence is Phosphoglycolate phosphatase (225 aa).

Asp-11 serves as the catalytic Nucleophile. Positions 11 and 13 each coordinate Mg(2+). Lys-153 contacts substrate. 2 residues coordinate Mg(2+): Asp-176 and Asp-180.

The protein belongs to the archaeal SPP-like hydrolase family. The cofactor is Mg(2+).

It catalyses the reaction 2-phosphoglycolate + H2O = glycolate + phosphate. Its function is as follows. Catalyzes the dephosphorylation of 2-phosphoglycolate. This Halobacterium salinarum (strain ATCC 29341 / DSM 671 / R1) protein is Phosphoglycolate phosphatase.